A 130-amino-acid chain; its full sequence is Small ribosomal subunit protein uS9 (130 aa).

It belongs to the universal ribosomal protein uS9 family.

In Lawsonia intracellularis (strain PHE/MN1-00), this protein is Small ribosomal subunit protein uS9.